We begin with the raw amino-acid sequence, 540 residues long: Chaperonin GroEL (540 aa).

ATP is bound by residues 29–32, 86–90, G413, 476–478, and D492; these read TIGP, DGTTT, and NAA.

Belongs to the chaperonin (HSP60) family. Forms a cylinder of 14 subunits composed of two heptameric rings stacked back-to-back. Interacts with the co-chaperonin GroES.

Its subcellular location is the cytoplasm. It carries out the reaction ATP + H2O + a folded polypeptide = ADP + phosphate + an unfolded polypeptide.. Its function is as follows. Together with its co-chaperonin GroES, plays an essential role in assisting protein folding. The GroEL-GroES system forms a nano-cage that allows encapsulation of the non-native substrate proteins and provides a physical environment optimized to promote and accelerate protein folding. The chain is Chaperonin GroEL from Staphylococcus carnosus (strain TM300).